The chain runs to 647 residues: Transcriptional repressor XBP1 (647 aa).

2 stretches are compositionally biased toward polar residues: residues 138 to 148 and 156 to 170; these read SNKTPVSASPT and STAS…LTKN. 2 disordered regions span residues 138–170 and 264–295; these read SNKT…LTKN and LLSS…STSS. Over residues 264 to 282 the composition is skewed to low complexity; the sequence is LLSSSTSSPPKRRTSTGST. The HTH APSES-type domain maps to 282–395; the sequence is TFLDANASSS…PDFPKDCESW (114 aa). The H-T-H motif DNA-binding region spans 318–339; the sequence is CQSYKDFLINELGPDQIDLPNL. Residues 425-434 are compositionally biased toward low complexity; that stretch reads TNFTSTAVAR. Disordered stretches follow at residues 425 to 455, 485 to 508, and 612 to 647; these read TNFT…HSKA, KKNS…GPRD, and QNQR…NSKQ. Basic residues predominate over residues 435–445; that stretch reads PRQKPRPRPRQ. Residues 493-502 are compositionally biased toward low complexity; the sequence is SSTYTSQTSS.

The protein localises to the nucleus. Functionally, transcriptional repressor which binds to the consensus sequence 5'-GCCTCGA[G/A]G[C/A]-3'. Represses CLN1 transcription. The chain is Transcriptional repressor XBP1 (XBP1) from Saccharomyces cerevisiae (strain ATCC 204508 / S288c) (Baker's yeast).